The chain runs to 521 residues: Cytochrome P450 1A1 (521 aa).

Phe229 contributes to the substrate binding site. Residue Cys463 participates in heme binding.

The protein belongs to the cytochrome P450 family. It depends on heme as a cofactor.

The protein resides in the endoplasmic reticulum membrane. Its subcellular location is the microsome membrane. It catalyses the reaction an organic molecule + reduced [NADPH--hemoprotein reductase] + O2 = an alcohol + oxidized [NADPH--hemoprotein reductase] + H2O + H(+). Its function is as follows. Cytochromes P450 are a group of heme-thiolate monooxygenases. They oxidize a variety of structurally unrelated compounds, including steroids, fatty acids, and xenobiotics. In Chaetodon capistratus (Four-eye butterflyfish), this protein is Cytochrome P450 1A1 (cyp1a1).